Here is a 433-residue protein sequence, read N- to C-terminus: Xylose isomerase (433 aa).

Asp305 and Asp307 together coordinate Mg(2+).

The protein belongs to the xylose isomerase family. As to quaternary structure, homotetramer. Mg(2+) serves as cofactor.

It is found in the cytoplasm. It catalyses the reaction alpha-D-xylose = alpha-D-xylulofuranose. This is Xylose isomerase from Cereibacter sphaeroides (strain KD131 / KCTC 12085) (Rhodobacter sphaeroides).